The following is a 319-amino-acid chain: Cytochrome f (319 aa).

Residues 1 to 35 form the signal peptide; the sequence is MQKKDVCEYITKWVSVTISTLVTIGVLVFPLSSEA. Heme-binding residues include tyrosine 36, cysteine 56, cysteine 59, and histidine 60. A helical transmembrane segment spans residues 285-305; the sequence is IQGLLVFFASVVLAQIFLVLK.

This sequence belongs to the cytochrome f family. As to quaternary structure, the 4 large subunits of the cytochrome b6-f complex are cytochrome b6, subunit IV (17 kDa polypeptide, petD), cytochrome f and the Rieske protein, while the 4 small subunits are PetG, PetL, PetM and PetN. The complex functions as a dimer. Requires heme as cofactor.

The protein localises to the plastid. Its subcellular location is the chloroplast thylakoid membrane. Its function is as follows. Component of the cytochrome b6-f complex, which mediates electron transfer between photosystem II (PSII) and photosystem I (PSI), cyclic electron flow around PSI, and state transitions. The protein is Cytochrome f of Zygnema circumcarinatum (Green alga).